The chain runs to 447 residues: Phosphoglucosamine mutase (447 aa).

Ser102 serves as the catalytic Phosphoserine intermediate. Mg(2+) contacts are provided by Ser102, Asp241, Asp243, and Asp245. Residue Ser102 is modified to Phosphoserine.

Belongs to the phosphohexose mutase family. The cofactor is Mg(2+). Post-translationally, activated by phosphorylation.

It carries out the reaction alpha-D-glucosamine 1-phosphate = D-glucosamine 6-phosphate. In terms of biological role, catalyzes the conversion of glucosamine-6-phosphate to glucosamine-1-phosphate. The polypeptide is Phosphoglucosamine mutase (Pseudoalteromonas atlantica (strain T6c / ATCC BAA-1087)).